The primary structure comprises 609 residues: Threonine--tRNA ligase (609 aa).

The interval 1-145 is editing domain; the sequence is MRLLLIHSDY…TIVPGAGAAV (145 aa). The tract at residues 194–485 is catalytic; it reads IHVDLMRSKE…TANQSVPQLP (292 aa). Zn(2+)-binding residues include Cys286, His338, and His458.

It belongs to the class-II aminoacyl-tRNA synthetase family. As to quaternary structure, homodimer. The cofactor is Zn(2+).

It localises to the cytoplasm. The catalysed reaction is tRNA(Thr) + L-threonine + ATP = L-threonyl-tRNA(Thr) + AMP + diphosphate + H(+). In terms of biological role, catalyzes the attachment of threonine to tRNA(Thr) in a two-step reaction: L-threonine is first activated by ATP to form Thr-AMP and then transferred to the acceptor end of tRNA(Thr). Also edits incorrectly charged L-seryl-tRNA(Thr). This is Threonine--tRNA ligase from Methanosphaerula palustris (strain ATCC BAA-1556 / DSM 19958 / E1-9c).